The chain runs to 375 residues: Actin-related protein T1 (375 aa).

It belongs to the actin family.

It localises to the cytoplasm. Its subcellular location is the cytoskeleton. The protein resides in the nucleus. It is found in the cytoplasmic vesicle. The protein localises to the secretory vesicle. It localises to the acrosome. Negatively regulates the Hedgehog (SHH) signaling. Binds to the promoter of the SHH signaling mediator, GLI1, and inhibits its expression. The polypeptide is Actin-related protein T1 (ACTRT1) (Macaca fascicularis (Crab-eating macaque)).